We begin with the raw amino-acid sequence, 214 residues long: Adenylate kinase (214 aa).

10–15 (GAGKGT) is a binding site for ATP. The interval 30–59 (STGDMLRAAVKAGTPLGLEAKKVMDAGQLV) is NMP. AMP contacts are provided by residues Thr31, Arg36, 57-59 (QLV), 85-88 (GFPR), and Gln92. Positions 122 to 159 (GRRVHPGSGRVYHVVFNPPKVEGKDDVTGEDLAIRPDD) are LID. Residues Arg123 and 132-133 (VY) contribute to the ATP site. AMP contacts are provided by Arg156 and Arg167. Residue Gln200 participates in ATP binding.

The protein belongs to the adenylate kinase family. In terms of assembly, monomer.

Its subcellular location is the cytoplasm. It catalyses the reaction AMP + ATP = 2 ADP. The protein operates within purine metabolism; AMP biosynthesis via salvage pathway; AMP from ADP: step 1/1. Its function is as follows. Catalyzes the reversible transfer of the terminal phosphate group between ATP and AMP. Plays an important role in cellular energy homeostasis and in adenine nucleotide metabolism. In Shewanella putrefaciens (strain CN-32 / ATCC BAA-453), this protein is Adenylate kinase.